Reading from the N-terminus, the 150-residue chain is Galactose-binding lectin (150 aa).

D-galactose contacts are provided by H16 and G19. The N-linked (GlcNAc...) asparagine glycan is linked to N26. Residues D27, D35–H37, H64, and G67 each bind D-galactose. A glycan (N-linked (GlcNAc...) asparagine) is linked at N74. Residues E75, D83–H85, H108, and G111 contribute to the D-galactose site. Residue N118 is glycosylated (N-linked (GlcNAc...) asparagine). Residues E119 and D127 to H129 contribute to the D-galactose site.

As to quaternary structure, homodimer. Likely to form large oligomers; oligomerization enhances hemagglutination activity. Glycosylated.

With respect to regulation, hemagglutination activity is not dependent on divalent cations. Hemagglutination activity is highly inhibited by D-galactose and N-acetyl-D-galactosamine, and to a lesser extent by raffinose. Also inhibited by melibiose and alpha-lactose, but not by beta-lactose or D-glucose. In terms of biological role, D-galactose-binding lectin. Also binds N-acetyl-D-galactosamine. Has hemagglutination activity towards all types of human erythrocytes (O, A and B) and rabbit erythrocytes. Agglutinates Gram-negative and Gram-positive bacteria including E.coli DH5-alpha and L.plantarum ATCC8014, respectively, and has bacteriostatic activity against them. Also agglutinates M.lysodeikticus. May be involved in innate immunity by recognizing and eliminating pathogens. This Mytilus californianus (California mussel) protein is Galactose-binding lectin.